Reading from the N-terminus, the 400-residue chain is Elongation factor Tu 2 (400 aa).

A tr-type G domain is found at 10–209 (KPHVNIGTIG…AVDEYIPTPQ (200 aa)). Residues 19-26 (GHVDHGKT) form a G1 region. 19–26 (GHVDHGKT) is a GTP binding site. Thr-26 contributes to the Mg(2+) binding site. Residues 60–64 (GITIN) are G2. A G3 region spans residues 81–84 (DCPG). GTP-binding positions include 81 to 85 (DCPGH) and 136 to 139 (NKAD). Positions 136 to 139 (NKAD) are G4. Residues 174–176 (SAL) form a G5 region.

The protein belongs to the TRAFAC class translation factor GTPase superfamily. Classic translation factor GTPase family. EF-Tu/EF-1A subfamily. In terms of assembly, monomer.

It localises to the cytoplasm. It catalyses the reaction GTP + H2O = GDP + phosphate + H(+). In terms of biological role, GTP hydrolase that promotes the GTP-dependent binding of aminoacyl-tRNA to the A-site of ribosomes during protein biosynthesis. The chain is Elongation factor Tu 2 from Pelotomaculum thermopropionicum (strain DSM 13744 / JCM 10971 / SI).